The sequence spans 65 residues: Small ribosomal subunit protein bS21 (65 aa).

The protein belongs to the bacterial ribosomal protein bS21 family.

This chain is Small ribosomal subunit protein bS21, found in Acidobacterium capsulatum (strain ATCC 51196 / DSM 11244 / BCRC 80197 / JCM 7670 / NBRC 15755 / NCIMB 13165 / 161).